We begin with the raw amino-acid sequence, 319 residues long: Zinc finger protein-like 1 homolog (319 aa).

The segment at 1–43 (MGLCKCPKRKVTNLFCYEHRVNVCEFCLVDNHPNCVVQSYLNW) adopts a B box-type; degenerate zinc-finger fold. Residues 53–101 (CSLCHTTLTQGETIRLNCLHLLHWRCFDDWAASFPPTTAPAGYRCPCCS) form an RING-type; atypical zinc finger. The segment at 212 to 232 (ESSSDTRPLLRQDRDADNEEN) is disordered. A compositionally biased stretch (basic and acidic residues) spans 219–232 (PLLRQDRDADNEEN). The chain crosses the membrane as a helical span at residues 264 to 284 (KMAIFVMFLALLALITIITVL).

The protein belongs to the ZFPL1 family.

The protein resides in the membrane. This is Zinc finger protein-like 1 homolog from Caenorhabditis briggsae.